The chain runs to 156 residues: ATP synthase subunit b (156 aa).

A helical membrane pass occupies residues 7 to 27; that stretch reads LIGELIAFTVFVLFCMKFVWP.

Belongs to the ATPase B chain family. As to quaternary structure, F-type ATPases have 2 components, F(1) - the catalytic core - and F(0) - the membrane proton channel. F(1) has five subunits: alpha(3), beta(3), gamma(1), delta(1), epsilon(1). F(0) has three main subunits: a(1), b(2) and c(10-14). The alpha and beta chains form an alternating ring which encloses part of the gamma chain. F(1) is attached to F(0) by a central stalk formed by the gamma and epsilon chains, while a peripheral stalk is formed by the delta and b chains.

It is found in the cell inner membrane. F(1)F(0) ATP synthase produces ATP from ADP in the presence of a proton or sodium gradient. F-type ATPases consist of two structural domains, F(1) containing the extramembraneous catalytic core and F(0) containing the membrane proton channel, linked together by a central stalk and a peripheral stalk. During catalysis, ATP synthesis in the catalytic domain of F(1) is coupled via a rotary mechanism of the central stalk subunits to proton translocation. Functionally, component of the F(0) channel, it forms part of the peripheral stalk, linking F(1) to F(0). In Pseudoalteromonas translucida (strain TAC 125), this protein is ATP synthase subunit b.